Consider the following 48-residue polypeptide: GYYYPYHGGHYYGAHYGGYPYGHFYNYRHTPYYSGLRYYGSYGYPHHF.

The sequence is that of Cuticle protein 6 isoform b from Limulus polyphemus (Atlantic horseshoe crab).